The chain runs to 268 residues: Mitochondrial distribution and morphology protein 12 (268 aa).

Positions 1–256 (MSFEINWQDL…WPSWINLDFN (256 aa)) constitute an SMP-LTD domain. The interval 75-94 (LPKDKIPEESDSGCQSADGE) is disordered.

Belongs to the MDM12 family. In terms of assembly, component of the ER-mitochondria encounter structure (ERMES) or MDM complex, composed of MMM1, MDM10, MDM12 and MDM34. An MMM1 homodimer associates with one molecule of MDM12 on each side in a pairwise head-to-tail manner, and the SMP-LTD domains of MMM1 and MDM12 generate a continuous hydrophobic tunnel for phospholipid trafficking.

It localises to the mitochondrion outer membrane. Its subcellular location is the endoplasmic reticulum membrane. In terms of biological role, component of the ERMES/MDM complex, which serves as a molecular tether to connect the endoplasmic reticulum (ER) and mitochondria. Components of this complex are involved in the control of mitochondrial shape and protein biogenesis, and function in nonvesicular lipid trafficking between the ER and mitochondria. MDM12 is required for the interaction of the ER-resident membrane protein MMM1 and the outer mitochondrial membrane-resident beta-barrel protein MDM10. The MDM12-MMM1 subcomplex functions in the major beta-barrel assembly pathway that is responsible for biogenesis of all mitochondrial outer membrane beta-barrel proteins, and acts in a late step after the SAM complex. The MDM10-MDM12-MMM1 subcomplex further acts in the TOM40-specific pathway after the action of the MDM12-MMM1 complex. Essential for establishing and maintaining the structure of mitochondria and maintenance of mtDNA nucleoids. This chain is Mitochondrial distribution and morphology protein 12, found in Lachancea thermotolerans (strain ATCC 56472 / CBS 6340 / NRRL Y-8284) (Yeast).